A 107-amino-acid polypeptide reads, in one-letter code: BolA-like protein 3 (107 aa).

It belongs to the BolA/IbaG family. In terms of assembly, interacts with NFU1. Widely expressed.

Its subcellular location is the mitochondrion. In terms of biological role, acts as a mitochondrial iron-sulfur (Fe-S) cluster assembly factor that facilitates (Fe-S) cluster insertion into a subset of mitochondrial proteins. Probably acts together with NFU1. The polypeptide is BolA-like protein 3 (Homo sapiens (Human)).